A 495-amino-acid polypeptide reads, in one-letter code: Cytochrome P450 monooxygenase cnsC (495 aa).

Cys434 is a heme binding site.

Belongs to the cytochrome P450 family. Heme is required as a cofactor.

It participates in alkaloid biosynthesis. Cytochrome P450 monooxygenase; part of the gene cluster that mediates the biosynthesis of communesins, a prominent class of indole alkaloids with great potential as pharmaceuticals. Communesins are biosynthesized by the coupling of tryptamine and aurantioclavine, two building blocks derived from L-tryptophan. The L-tryptophan decarboxylase cnsB converts L-tryptophan to tryptamine, whereas the tryptophan dimethylallyltransferase cnsF converts L-tryptophan to 4-dimethylallyl tryptophan which is further transformed to aurantioclavine by the aurantioclavine synthase cnsA, probably aided by the catalase cnsD. The cytochrome P450 monooxygenase cnsC catalyzes the heterodimeric coupling between the two different indole moieties, tryptamine and aurantioclavine, to construct vicinal quaternary stereocenters and yield the heptacyclic communesin scaffold. The O-methyltransferase cnsE then methylates the communesin scaffold to produce communesin K, the simplest characterized communesin that contains the heptacyclic core. The dioxygenase cnsJ converts communesin K into communesin I. Acylation to introduce the hexadienyl group at position N16 of communesin I by the acyltransferase cnsK leads to the production of communesin B. The hexadienyl group is produced by the highly reducing polyketide synthase cnsI, before being hydrolytically removed from cnsI by the serine hydrolase cnsH, converted into hexadienyl-CoA by the CoA ligase cnsG, and then transferred to communesin I by cnsK. Surprisingly, cnsK may also be a promiscuous acyltransferase that can tolerate a range of acyl groups, including acetyl-, propionyl-, and butyryl-CoA, which lead to communesins A, G and H respectively. The roles of the alpha-ketoglutarate-dependent dioxygenases cnsM and cnsP have still to be determined. This Penicillium expansum (Blue mold rot fungus) protein is Cytochrome P450 monooxygenase cnsC.